The chain runs to 619 residues: 1-deoxy-D-xylulose-5-phosphate synthase (619 aa).

Thiamine diphosphate contacts are provided by residues His-74 and 115-117 (GHS). Asp-146 contributes to the Mg(2+) binding site. Thiamine diphosphate-binding positions include 147 to 148 (GA), Asn-175, and Tyr-285. A Mg(2+)-binding site is contributed by Asn-175. Residues 289-312 (EKSPSKYHAVPPRANEKEKPSKPC) form a disordered region. Over residues 302 to 312 (ANEKEKPSKPC) the composition is skewed to basic and acidic residues. Glu-365 contributes to the thiamine diphosphate binding site.

Belongs to the transketolase family. DXPS subfamily. In terms of assembly, homodimer. The cofactor is Mg(2+). It depends on thiamine diphosphate as a cofactor.

It catalyses the reaction D-glyceraldehyde 3-phosphate + pyruvate + H(+) = 1-deoxy-D-xylulose 5-phosphate + CO2. It functions in the pathway metabolic intermediate biosynthesis; 1-deoxy-D-xylulose 5-phosphate biosynthesis; 1-deoxy-D-xylulose 5-phosphate from D-glyceraldehyde 3-phosphate and pyruvate: step 1/1. Its function is as follows. Catalyzes the acyloin condensation reaction between C atoms 2 and 3 of pyruvate and glyceraldehyde 3-phosphate to yield 1-deoxy-D-xylulose-5-phosphate (DXP). The polypeptide is 1-deoxy-D-xylulose-5-phosphate synthase (Clostridium botulinum (strain Eklund 17B / Type B)).